Consider the following 363-residue polypeptide: DNA primase small subunit PriS (363 aa).

Catalysis depends on residues Asp105, Asp107, and Asp265.

Belongs to the eukaryotic-type primase small subunit family. As to quaternary structure, heterodimer of a small subunit (PriS) and a large subunit (PriL). Requires Mg(2+) as cofactor. Mn(2+) is required as a cofactor.

Catalytic subunit of DNA primase, an RNA polymerase that catalyzes the synthesis of short RNA molecules used as primers for DNA polymerase during DNA replication. The small subunit contains the primase catalytic core and has DNA synthesis activity on its own. Binding to the large subunit stabilizes and modulates the activity, increasing the rate of DNA synthesis while decreasing the length of the DNA fragments, and conferring RNA synthesis capability. The DNA polymerase activity may enable DNA primase to also catalyze primer extension after primer synthesis. May also play a role in DNA repair. The chain is DNA primase small subunit PriS from Methanococcus maripaludis (strain C7 / ATCC BAA-1331).